The following is a 379-amino-acid chain: Glutamate 5-kinase (379 aa).

K8 provides a ligand contact to ATP. Substrate is bound by residues S49, D136, and N148. Residues 168–169 (TD) and 211–217 (TGGMATK) each bind ATP. In terms of domain architecture, PUA spans 276 to 354 (MGKIYLDAGA…ERIASLLGYM (79 aa)).

The protein belongs to the glutamate 5-kinase family.

It localises to the cytoplasm. It catalyses the reaction L-glutamate + ATP = L-glutamyl 5-phosphate + ADP. The protein operates within amino-acid biosynthesis; L-proline biosynthesis; L-glutamate 5-semialdehyde from L-glutamate: step 1/2. Functionally, catalyzes the transfer of a phosphate group to glutamate to form L-glutamate 5-phosphate. In Microcystis aeruginosa (strain NIES-843 / IAM M-2473), this protein is Glutamate 5-kinase.